The following is a 533-amino-acid chain: GMP synthase [glutamine-hydrolyzing] (533 aa).

One can recognise a Glutamine amidotransferase type-1 domain in the interval 12 to 206 (TILVLDFGSQ…AVGICGAEQK (195 aa)). Catalysis depends on Cys88, which acts as the Nucleophile. Catalysis depends on residues His180 and Glu182. A GMPS ATP-PPase domain is found at 207–408 (WTMAEFIGQE…LGISPELVGR (202 aa)). 235 to 241 (SGGVDST) is a binding site for ATP. XMP is bound by residues Arg308, Asp470, Lys525, and Glu531.

Homodimer. Requires Mg(2+) as cofactor.

Its subcellular location is the cytoplasm. The protein resides in the cytosol. It catalyses the reaction XMP + L-glutamine + ATP + H2O = GMP + L-glutamate + AMP + diphosphate + 2 H(+). It functions in the pathway purine metabolism; GMP biosynthesis; GMP from XMP (L-Gln route): step 1/1. Its function is as follows. Catalyzes the conversion of xanthine monophosphate (XMP) to GMP in the presence of glutamine and ATP through an adenyl-XMP intermediate. The chain is GMP synthase [glutamine-hydrolyzing] (gua1) from Emericella nidulans (strain FGSC A4 / ATCC 38163 / CBS 112.46 / NRRL 194 / M139) (Aspergillus nidulans).